The following is a 320-amino-acid chain: Cytochrome f (320 aa).

The signal sequence occupies residues 1–35; the sequence is MQTRNTFFWIKEQMTRSISVSIIVYVITQTSISNA. Heme is bound by residues Y36, C56, C59, and H60. A helical membrane pass occupies residues 286-306; it reads VQGLLFFFASVILAQIFLVLK.

This sequence belongs to the cytochrome f family. As to quaternary structure, the 4 large subunits of the cytochrome b6-f complex are cytochrome b6, subunit IV (17 kDa polypeptide, petD), cytochrome f and the Rieske protein, while the 4 small subunits are PetG, PetL, PetM and PetN. The complex functions as a dimer. Heme is required as a cofactor.

The protein resides in the plastid. It localises to the chloroplast thylakoid membrane. Functionally, component of the cytochrome b6-f complex, which mediates electron transfer between photosystem II (PSII) and photosystem I (PSI), cyclic electron flow around PSI, and state transitions. In Buxus microphylla (Littleleaf boxwood), this protein is Cytochrome f.